The sequence spans 227 residues: Cytochrome c oxidase subunit 2 (227 aa).

Residues 1–14 lie on the Mitochondrial intermembrane side of the membrane; it reads MAHRAQVGLQDATS. The chain crosses the membrane as a helical span at residues 15-45; sequence PIMEELVIFHDHALMIIFLICFLVLYALFLT. At 46–59 the chain is on the mitochondrial matrix side; that stretch reads LTTKLTNTNISDAQ. The helical transmembrane segment at 60–87 threads the bilayer; the sequence is EMETIWTTLPAIILILIALPSLRILYLT. At 88-227 the chain is on the mitochondrial intermembrane side; it reads DEINDPSFTI…IFEMGPVFAL (140 aa). Residues histidine 161, cysteine 196, glutamate 198, cysteine 200, histidine 204, and methionine 207 each contribute to the Cu cation site. Glutamate 198 lines the Mg(2+) pocket.

The protein belongs to the cytochrome c oxidase subunit 2 family. Component of the cytochrome c oxidase (complex IV, CIV), a multisubunit enzyme composed of 14 subunits. The complex is composed of a catalytic core of 3 subunits MT-CO1, MT-CO2 and MT-CO3, encoded in the mitochondrial DNA, and 11 supernumerary subunits COX4I, COX5A, COX5B, COX6A, COX6B, COX6C, COX7A, COX7B, COX7C, COX8 and NDUFA4, which are encoded in the nuclear genome. The complex exists as a monomer or a dimer and forms supercomplexes (SCs) in the inner mitochondrial membrane with NADH-ubiquinone oxidoreductase (complex I, CI) and ubiquinol-cytochrome c oxidoreductase (cytochrome b-c1 complex, complex III, CIII), resulting in different assemblies (supercomplex SCI(1)III(2)IV(1) and megacomplex MCI(2)III(2)IV(2)). Found in a complex with TMEM177, COA6, COX18, COX20, SCO1 and SCO2. Interacts with TMEM177 in a COX20-dependent manner. Interacts with COX20. Interacts with COX16. The cofactor is Cu cation.

The protein localises to the mitochondrion inner membrane. It catalyses the reaction 4 Fe(II)-[cytochrome c] + O2 + 8 H(+)(in) = 4 Fe(III)-[cytochrome c] + 2 H2O + 4 H(+)(out). In terms of biological role, component of the cytochrome c oxidase, the last enzyme in the mitochondrial electron transport chain which drives oxidative phosphorylation. The respiratory chain contains 3 multisubunit complexes succinate dehydrogenase (complex II, CII), ubiquinol-cytochrome c oxidoreductase (cytochrome b-c1 complex, complex III, CIII) and cytochrome c oxidase (complex IV, CIV), that cooperate to transfer electrons derived from NADH and succinate to molecular oxygen, creating an electrochemical gradient over the inner membrane that drives transmembrane transport and the ATP synthase. Cytochrome c oxidase is the component of the respiratory chain that catalyzes the reduction of oxygen to water. Electrons originating from reduced cytochrome c in the intermembrane space (IMS) are transferred via the dinuclear copper A center (CU(A)) of subunit 2 and heme A of subunit 1 to the active site in subunit 1, a binuclear center (BNC) formed by heme A3 and copper B (CU(B)). The BNC reduces molecular oxygen to 2 water molecules using 4 electrons from cytochrome c in the IMS and 4 protons from the mitochondrial matrix. This Pongo pygmaeus (Bornean orangutan) protein is Cytochrome c oxidase subunit 2 (MT-CO2).